A 43-amino-acid chain; its full sequence is Photosystem I reaction center subunit IX (43 aa).

A helical membrane pass occupies residues 7-27; the sequence is YLSTAPVLSTIWFGSLAGLLI.

This sequence belongs to the PsaJ family.

Its subcellular location is the plastid. The protein resides in the chloroplast thylakoid membrane. Its function is as follows. May help in the organization of the PsaE and PsaF subunits. The sequence is that of Photosystem I reaction center subunit IX from Vitis vinifera (Grape).